A 102-amino-acid chain; its full sequence is Major basic nuclear protein 2 (102 aa).

Over residues 1–11 (MKAMKATKKAM) the composition is skewed to basic residues. The segment at 1–43 (MKAMKATKKAMTKTGLAEALAPKPSSARRIAPPSSRAWPPSAQ) is disordered. Residues 21 to 42 (APKPSSARRIAPPSSRAWPPSA) show a composition bias toward low complexity.

It localises to the nucleus. This chain is Major basic nuclear protein 2 (HCc2), found in Crypthecodinium cohnii (Dinoflagellate).